Consider the following 138-residue polypeptide: Small ribosomal subunit protein uS11 (138 aa).

It belongs to the universal ribosomal protein uS11 family. In terms of assembly, part of the 30S ribosomal subunit.

Functionally, located on the platform of the 30S subunit. The sequence is that of Small ribosomal subunit protein uS11 from Pyrobaculum arsenaticum (strain DSM 13514 / JCM 11321 / PZ6).